Consider the following 580-residue polypeptide: Tricyclene synthase TPS4, chloroplastic (580 aa).

Residues 1 to 41 (MLLNSSFISLPSFFKSQELGRTNLLIHRNGSPLLCYATNTN) constitute a chloroplast transit peptide. (2E)-geranyl diphosphate contacts are provided by arginine 296, aspartate 334, aspartate 338, arginine 475, and asparagine 478. Positions 334 and 338 each coordinate Mg(2+). The short motif at 334-338 (DDIYD) is the DDXXD motif element. Asparagine 478, threonine 482, and glutamate 486 together coordinate Mg(2+).

The protein belongs to the terpene synthase family. Tpsb subfamily. Mg(2+) serves as cofactor. Mn(2+) is required as a cofactor. In terms of tissue distribution, expressed in leaves.

The protein localises to the plastid. Its subcellular location is the chloroplast stroma. The catalysed reaction is (2E)-geranyl diphosphate = tricyclene + diphosphate. It catalyses the reaction (2E)-geranyl diphosphate = (E)-beta-ocimene + diphosphate. It functions in the pathway secondary metabolite biosynthesis; terpenoid biosynthesis. In terms of biological role, promotes the emission of terpenes volatile organic compounds (VOC) in response to damage mediated by arthropod herbivores (e.g. Spodoptera exigua), probably to attract natural enemies of the herbivores. The protein is Tricyclene synthase TPS4, chloroplastic (TPS4) of Medicago truncatula (Barrel medic).